The sequence spans 476 residues: MFDVIVVGGGPTGLMLAGELRLHGVRVLVLEKETEPTRQSRAQGLHVRSIEVMAQRGLLERFLERGHTVAVGGFFAGLATSWPERLDTAHSYVLAVPQVITEQLLAEHATALGAEIRRGRALVGLRQDEDGVTVDLADGEQLRARYVVGCDGGRSTVRKLLGVAFPGEPSRVETLLGEMEMTASQEELTSVMTEVRKTQQRFGAMPLGDGVFRVVVPAEGVAEDRTASPTLDEFKQQLRAHAGTDFGVHSPRWLSRFGDATRQAERYRVDRVFLAGDAAHIHPPTGGQGLNLGIQDAFNLGWKLAAEVDGWAPEGLLDTYHAERHPVATEVLDNTRAQIQLMSTEPGPQAVRRLMAELVEFENVNRYLIEKITAISVRYDVGEGHELLGRRMRDLALKHGRLYERMHEGRGLLLDQTGRLSVAGWEDRVDHVVEVSEELDVPAVLLRPDGHVVWAGEDQQELLTRMPAWFGAATAG.

FAD is bound by residues Thr-12, Glu-31, Lys-32, Gln-98, Leu-122, and Thr-156. Rifampicin-binding residues include Arg-196 and Arg-213. FAD contacts are provided by Asp-277, Leu-290, and Asn-291.

Belongs to the rifampicin monooxygenase family. FAD serves as cofactor.

It catalyses the reaction rifampicin + NADPH + O2 = rifampicin para-naphthoquinone carboxamide + NADP(+) + H2O + H(+). It carries out the reaction rifampicin + NADH + O2 = rifampicin para-naphthoquinone carboxamide + NAD(+) + H2O + H(+). The enzyme catalyses rifamycin SV + NADPH + O2 = rifamycin SV para-naphthoquinone carboxamide + NADP(+) + H2O. The catalysed reaction is rifamycin SV + NADH + O2 = rifamycin SV para-naphthoquinone carboxamide + NAD(+) + H2O. Its function is as follows. Monooxygenase that can modify rifampicin, thereby inactivating its antibiotic activity. Inactivates a broad range of rifamycin antibiotics. The protein is Rifampicin monooxygenase of Streptomyces venezuelae (strain ATCC 10712 / CBS 650.69 / DSM 40230 / JCM 4526 / NBRC 13096 / PD 04745).